The primary structure comprises 364 residues: Methylenetetrahydrofolate--tRNA-(uracil-5-)-methyltransferase TrmFO (364 aa).

FAD is bound at residue 11–16 (GAGLAG). Over residues 335-352 (SYLNQPCSSANDPTSSLL) the composition is skewed to polar residues. Residues 335–364 (SYLNQPCSSANDPTSSLLDRSPAQRDIPLQ) form a disordered region.

It belongs to the MnmG family. TrmFO subfamily. The cofactor is FAD.

The protein resides in the cytoplasm. It catalyses the reaction uridine(54) in tRNA + (6R)-5,10-methylene-5,6,7,8-tetrahydrofolate + NADH + H(+) = 5-methyluridine(54) in tRNA + (6S)-5,6,7,8-tetrahydrofolate + NAD(+). The catalysed reaction is uridine(54) in tRNA + (6R)-5,10-methylene-5,6,7,8-tetrahydrofolate + NADPH + H(+) = 5-methyluridine(54) in tRNA + (6S)-5,6,7,8-tetrahydrofolate + NADP(+). In terms of biological role, catalyzes the folate-dependent formation of 5-methyl-uridine at position 54 (M-5-U54) in all tRNAs. This chain is Methylenetetrahydrofolate--tRNA-(uracil-5-)-methyltransferase TrmFO, found in Prochlorococcus marinus (strain MIT 9313).